The following is a 73-amino-acid chain: Omega-hexatoxin-Ar1b (73 aa).

Positions Met1 to Ala22 are cleaved as a signal peptide. A propeptide spanning residues Gly23–Arg37 is cleaved from the precursor. 3 disulfide bridges follow: Cys40–Cys54, Cys47–Cys58, and Cys53–Cys72.

Belongs to the neurotoxin 08 (Shiva) family. 01 (omega toxin) subfamily. Expressed by the venom gland.

The protein resides in the secreted. In terms of biological role, insecticidal toxin that reversibly and voltage-independently blocks both mid-low- (M-LVA) and high-voltage-activated (HVA) calcium channels (Cav) in cockroach DUM neurons. Also causes a modest block of insect sodium channel currents (Nav). Induces potent excitatory symptoms, followed by flaccid paralysis leading to death in house crickets. This chain is Omega-hexatoxin-Ar1b, found in Atrax robustus (Sydney funnel-web spider).